The sequence spans 533 residues: Lysine--tRNA ligase 1 (533 aa).

Positions 26-34 (PSGHIHIGN) match the 'HIGH' region motif. The 'KMSKS' region motif lies at 272-276 (AMSSS).

Belongs to the class-I aminoacyl-tRNA synthetase family.

The protein resides in the cytoplasm. The enzyme catalyses tRNA(Lys) + L-lysine + ATP = L-lysyl-tRNA(Lys) + AMP + diphosphate. The chain is Lysine--tRNA ligase 1 from Methanosarcina acetivorans (strain ATCC 35395 / DSM 2834 / JCM 12185 / C2A).